The sequence spans 933 residues: Progesterone receptor (933 aa).

The segment at 1-164 (MTELKAKGPR…PATQRVLSPL (164 aa)) is AF3; mediates transcriptional activation. The tract at residues 1–256 (MTELKAKGPR…AAAGGGAAAV (256 aa)) is disordered. Residues 1 to 566 (MTELKAKGPR…YSFESLPQKI (566 aa)) form a modulating, Pro-Rich region. The residue at position 20 (Ser20) is a Phosphoserine. Short sequence motifs (LXXL motif) lie at residues 55-59 (LDGLL) and 115-119 (LDTLL). Residues Ser130 and Ser162 each carry the phosphoserine modification. The tract at residues 165 to 305 (MSRSGGKAGD…LATTTMDFIH (141 aa)) is mediates transcriptional transrepression. The Nuclear localization signal motif lies at 183-187 (KVLPR). Phosphoserine occurs at positions 190 and 213. Residues 220–231 (EVEEEDGSESED) show a composition bias toward acidic residues. A Phosphoserine; by MAPK1 modification is found at Ser294. The segment at 332–380 (GAGAASAFAPPRSSPSASSTPVAVGDFPDCAYPPDADPKDDAYPLYGDF) is disordered. Low complexity predominate over residues 335 to 350 (AASAFAPPRSSPSASS). At Ser345 the chain carries Phosphoserine; by MAPK. Lys388 is covalently cross-linked (Glycyl lysine isopeptide (Lys-Gly) (interchain with G-Cter in SUMO); alternate). Lys388 participates in a covalent cross-link: Glycyl lysine isopeptide (Lys-Gly) (interchain with G-Cter in ubiquitin); alternate. Ser400 is modified (phosphoserine; by CDK2). The tract at residues 415–454 (PDFPLGPPPPLPPRAPPSRPGEAAVTAAPASASVSSSSSS) is disordered. Over residues 418-433 (PLGPPPPLPPRAPPSR) the composition is skewed to pro residues. Residues 434–454 (PGEAAVTAAPASASVSSSSSS) show a composition bias toward low complexity. An AF1; mediates transcriptional activation region spans residues 456–546 (STLECILYKA…VYPPYLNYLR (91 aa)). Lys531 participates in a covalent cross-link: Glycyl lysine isopeptide (Lys-Gly) (interchain with G-Cter in SUMO). 2 consecutive NR C4-type zinc fingers follow at residues 567–587 (CLIC…CGSC) and 603–627 (CAGR…LRKC). The nuclear receptor DNA-binding region spans 567–639 (CLICGDEASG…AGMVLGGRKF (73 aa)). Residue Ser676 is modified to Phosphoserine. The NR LBD domain occupies 679 to 913 (QDIQFFPPLI…EFPEMMSEVI (235 aa)). Residues 687 to 933 (LINLLVSIEP…MVKPLLFHKK (247 aa)) form an AF2; mediates transcriptional activation region. Arg766 contributes to the progesterone binding site.

It belongs to the nuclear hormone receptor family. Interacts with SMARD1 and UNC45A. Interacts with CUEDC2; the interaction promotes ubiquitination, decreases sumoylation, and represses transcriptional activity. Interacts with PIAS3; the interaction promotes sumoylation of PR in a hormone-dependent manner, inhibits DNA-binding, and alters nuclear export. Interacts with SP1; the interaction requires ligand-induced phosphorylation on Ser-345 by ERK1/2-MAPK. Interacts with PRMT2. Interacts with NCOA2 and NCOA1. Interacts with KLF9. Interacts with GTF2B. Post-translationally, phosphorylated on multiple serine sites. Several of these sites are hormone-dependent. Phosphorylation on Ser-294 is highly hormone-dependent and modulates ubiquitination and sumoylation on Lys-388. Phosphorylation on Ser-345 also requires induction by hormone. Basal phosphorylation on Ser-162, Ser-190 and Ser-400 is increased in response to progesterone and can be phosphorylated in vitro by the CDK2-A1 complex. Increased levels of phosphorylation on Ser-400 also in the presence of EGF, heregulin, IGF, PMA and FBS. Phosphorylation at this site by CDK2 is ligand-independent, and increases nuclear translocation and transcriptional activity. Phosphorylation at Ser-162 and Ser-294, but not at Ser-190, is impaired during the G(2)/M phase of the cell cycle. Phosphorylation on Ser-345 by ERK1/2 MAPK is required for interaction with SP1. In terms of processing, sumoylation is hormone-dependent and represses transcriptional activity. Sumoylation on all three sites is enhanced by PIAS3. Desumoylated by SENP1. Sumoylation on Lys-388, the main site of sumoylation, is repressed by ubiquitination on the same site, and modulated by phosphorylation at Ser-294. Ubiquitination is hormone-dependent and represses sumoylation on the same site. Promoted by MAPK-mediated phosphorylation on Ser-294. Ubiquitinated by UBR5, leading to its degradation: UBR5 specifically recognizes and binds ligand-bound PGR when it is not associated with coactivators (NCOAs). In presence of NCOAs, the UBR5-degron is not accessible, preventing its ubiquitination and degradation. Post-translationally, palmitoylated by ZDHHC7 and ZDHHC21. Palmitoylation is required for plasma membrane targeting and for rapid intracellular signaling via ERK and AKT kinases and cAMP generation.

The protein resides in the nucleus. The protein localises to the cytoplasm. Functionally, the steroid hormones and their receptors are involved in the regulation of eukaryotic gene expression and affect cellular proliferation and differentiation in target tissues. Transcriptional activator of several progesteron-dependent promoters in a variety of cell types. Involved in activation of SRC-dependent MAPK signaling on hormone stimulation. The protein is Progesterone receptor (PGR) of Chlorocebus aethiops (Green monkey).